A 389-amino-acid polypeptide reads, in one-letter code: Na(+)/H(+) antiporter NhaA 1 (389 aa).

The next 12 membrane-spanning stretches (helical) occupy residues 12 to 32, 62 to 82, 97 to 117, 128 to 148, 157 to 177, 184 to 204, 220 to 240, 260 to 280, 282 to 302, 305 to 325, 331 to 351, and 365 to 385; these read VLNE…ALLV, FLLW…GLEL, IVLP…LFVL, GWAI…MMCG, IFLL…IAIF, IVAF…NILG, ISVL…AFFI, FWLA…VNLS, IDIG…LFVG, AGVF…LPQG, LYGV…IDGL, and LAIL…LKFF.

This sequence belongs to the NhaA Na(+)/H(+) (TC 2.A.33) antiporter family.

The protein localises to the cell inner membrane. The enzyme catalyses Na(+)(in) + 2 H(+)(out) = Na(+)(out) + 2 H(+)(in). In terms of biological role, na(+)/H(+) antiporter that extrudes sodium in exchange for external protons. This Campylobacter jejuni subsp. jejuni serotype O:23/36 (strain 81-176) protein is Na(+)/H(+) antiporter NhaA 1.